The following is a 113-amino-acid chain: MMKRLVVLRRREPAVRFSCCGVRYGECRRNHAASTGGHAVDGCREFIAAEDGGGGNSTGAVGVAAAALKCAACGCHRSFHRRVQVYEVAWDDDCDSGDTSSSSPSSSSSLSSE.

The ZF-HD dimerization-type; degenerate zinc finger occupies 24 to 83 (YGECRRNHAASTGGHAVDGCREFIAAEDGGGGNSTGAVGVAAAALKCAACGCHRSFHRRV). The interval 93 to 113 (DCDSGDTSSSSPSSSSSLSSE) is disordered. Positions 97–113 (GDTSSSSPSSSSSLSSE) are enriched in low complexity.

In terms of assembly, homo- and heterodimers.

It localises to the cytoplasm. In terms of biological role, inhibits zinc finger homeodomain (ZHD) transcription factors, by interacting with them to prevent both their nuclear localization and their DNA-binding properties. This chain is Mini zinc finger protein 3 (MIF3), found in Oryza sativa subsp. indica (Rice).